The chain runs to 219 residues: Phosphate-specific transport system accessory protein PhoU homolog 1 (219 aa).

The protein belongs to the PhoU family. In terms of assembly, homodimer.

The protein resides in the cytoplasm. Its function is as follows. Plays a role in the regulation of phosphate uptake. The polypeptide is Phosphate-specific transport system accessory protein PhoU homolog 1 (Methanothermobacter thermautotrophicus (strain ATCC 29096 / DSM 1053 / JCM 10044 / NBRC 100330 / Delta H) (Methanobacterium thermoautotrophicum)).